A 257-amino-acid chain; its full sequence is Diphthine synthase (257 aa).

S-adenosyl-L-methionine is bound by residues I11, D89, I92, 117–118, L169, L210, and H235; that span reads SV.

It belongs to the diphthine synthase family. Homodimer.

The enzyme catalyses 2-[(3S)-amino-3-carboxypropyl]-L-histidyl-[translation elongation factor 2] + 3 S-adenosyl-L-methionine = diphthine-[translation elongation factor 2] + 3 S-adenosyl-L-homocysteine + 3 H(+). It functions in the pathway protein modification; peptidyl-diphthamide biosynthesis. Functionally, S-adenosyl-L-methionine-dependent methyltransferase that catalyzes the trimethylation of the amino group of the modified target histidine residue in translation elongation factor 2 (EF-2), to form an intermediate called diphthine. The three successive methylation reactions represent the second step of diphthamide biosynthesis. The sequence is that of Diphthine synthase from Saccharolobus solfataricus (strain ATCC 35092 / DSM 1617 / JCM 11322 / P2) (Sulfolobus solfataricus).